We begin with the raw amino-acid sequence, 20 residues long: Antifungal protein (20 aa).

Belongs to the protease inhibitor I3 (leguminous Kunitz-type inhibitor) family.

Its function is as follows. Inhibits soybean trypsin. Has antifungal activity against R.cerealis, A.brassicae and A.niger, and weak antifungal activity against F.oxysporum. The sequence is that of Antifungal protein from Cullen corylifolium (Malaysian scurfpea).